A 301-amino-acid chain; its full sequence is Probable aspartoacylase (301 aa).

Residues H13 and E16 each coordinate Zn(2+). Residues R54 and 61 to 62 (NR) contribute to the substrate site. H105 is a binding site for Zn(2+). Residues E163 and Y273 each coordinate substrate.

It belongs to the AspA/AstE family. Aspartoacylase subfamily. Zn(2+) is required as a cofactor.

The enzyme catalyses an N-acyl-L-aspartate + H2O = a carboxylate + L-aspartate. The protein is Probable aspartoacylase of Prochlorococcus marinus (strain MIT 9301).